A 562-amino-acid chain; its full sequence is BOS complex subunit NCLN (562 aa).

Positions 1 to 41 (MLEEAGEVLESVLKASCLPLSFLLFVPAVLLLLGPPPAAEA) are cleaved as a signal peptide. Residues 42–521 (AHESTVYRMQ…VMNAYRVKPA (480 aa)) lie on the Extracellular side of the membrane. An N-linked (GlcNAc...) asparagine glycan is attached at asparagine 240. The interval 420-447 (GFDEGHLQPNREGSTCRSADLHGSDADP) is disordered. A helical membrane pass occupies residues 522-542 (IFDLLLAVCIAAYLGVAYVAV). Residues 543–562 (QNFGLLYRMIQRLSLKTKQQ) lie on the Cytoplasmic side of the membrane.

Belongs to the nicastrin family. As to quaternary structure, component of the multi-pass translocon (MPT) complex.

The protein localises to the endoplasmic reticulum membrane. Component of the multi-pass translocon (MPT) complex that mediates insertion of multi-pass membrane proteins into the lipid bilayer of membranes. The MPT complex takes over after the SEC61 complex: following membrane insertion of the first few transmembrane segments of proteins by the SEC61 complex, the MPT complex occludes the lateral gate of the SEC61 complex to promote insertion of subsequent transmembrane regions. May antagonize Nodal signaling and subsequent organization of axial structures during mesodermal patterning, via its interaction with NOMO. This chain is BOS complex subunit NCLN (NCLN), found in Gallus gallus (Chicken).